A 444-amino-acid chain; its full sequence is Tubulin beta-8 chain (444 aa).

The MREI motif motif lies at 1 to 4 (MREI). 6 residues coordinate GTP: Gln11, Glu69, Ser138, Gly142, Thr143, and Gly144. Glu69 serves as a coordination point for Mg(2+). At Ser172 the chain carries Phosphoserine; by CDK1. Residues Asn204 and Asn226 each coordinate GTP. The tract at residues 423–444 (QQYQDATAEEEEDEEYAEEEVA) is disordered. The span at 429 to 444 (TAEEEEDEEYAEEEVA) shows a compositional bias: acidic residues. Glu436 bears the 5-glutamyl polyglutamate mark.

Belongs to the tubulin family. Dimer of alpha and beta chains. A typical microtubule is a hollow water-filled tube with an outer diameter of 25 nm and an inner diameter of 15 nM. Alpha-beta heterodimers associate head-to-tail to form protofilaments running lengthwise along the microtubule wall with the beta-tubulin subunit facing the microtubule plus end conferring a structural polarity. Microtubules usually have 13 protofilaments but different protofilament numbers can be found in some organisms and specialized cells. The cofactor is Mg(2+). Some glutamate residues at the C-terminus are polyglycylated, resulting in polyglycine chains on the gamma-carboxyl group. Glycylation is mainly limited to tubulin incorporated into axonemes (cilia and flagella) whereas glutamylation is prevalent in neuronal cells, centrioles, axonemes, and the mitotic spindle. Both modifications can coexist on the same protein on adjacent residues, and lowering polyglycylation levels increases polyglutamylation, and reciprocally. Cilia and flagella glycylation is required for their stability and maintenance. Flagella glycylation controls sperm motility. Post-translationally, some glutamate residues at the C-terminus are polyglutamylated, resulting in polyglutamate chains on the gamma-carboxyl group. Polyglutamylation plays a key role in microtubule severing by spastin (SPAST). SPAST preferentially recognizes and acts on microtubules decorated with short polyglutamate tails: severing activity by SPAST increases as the number of glutamates per tubulin rises from one to eight, but decreases beyond this glutamylation threshold. Glutamylation is also involved in cilia motility. In terms of processing, phosphorylated on Ser-172 by CDK1 during the cell cycle, from metaphase to telophase, but not in interphase. This phosphorylation inhibits tubulin incorporation into microtubules.

It is found in the cytoplasm. The protein localises to the cytoskeleton. Its subcellular location is the spindle. Its function is as follows. Tubulin is the major constituent of microtubules, a cylinder consisting of laterally associated linear protofilaments composed of alpha- and beta-tubulin heterodimers. Microtubules grow by the addition of GTP-tubulin dimers to the microtubule end, where a stabilizing cap forms. Below the cap, tubulin dimers are in GDP-bound state, owing to GTPase activity of alpha-tubulin. Has a key role in meiotic spindle assembly and oocyte maturation. In Pan troglodytes (Chimpanzee), this protein is Tubulin beta-8 chain (TUBB8).